A 202-amino-acid chain; its full sequence is Na(+)-translocating NADH-quinone reductase subunit E (202 aa).

6 helical membrane passes run A11–I31, V35–V55, L79–E99, G114–V134, T144–I164, and L180–V200.

It belongs to the NqrDE/RnfAE family. Composed of six subunits; NqrA, NqrB, NqrC, NqrD, NqrE and NqrF.

It localises to the cell inner membrane. The catalysed reaction is a ubiquinone + n Na(+)(in) + NADH + H(+) = a ubiquinol + n Na(+)(out) + NAD(+). In terms of biological role, NQR complex catalyzes the reduction of ubiquinone-1 to ubiquinol by two successive reactions, coupled with the transport of Na(+) ions from the cytoplasm to the periplasm. NqrA to NqrE are probably involved in the second step, the conversion of ubisemiquinone to ubiquinol. This Ectopseudomonas mendocina (strain ymp) (Pseudomonas mendocina) protein is Na(+)-translocating NADH-quinone reductase subunit E.